Consider the following 254-residue polypeptide: L-rhamnose 1-dehydrogenase (NAD(P)(+)) (254 aa).

Residues Gly-13, Ser-15, Ile-18, Asp-64, Val-65, and Asn-91 each coordinate NADP(+). Catalysis depends on Ser-144, which acts as the Proton donor. 4 residues coordinate beta-L-rhamnose: Ser-144, Ser-146, Gln-154, and Tyr-157. 2 residues coordinate NADP(+): Tyr-157 and Lys-161. Tyr-157 acts as the Proton acceptor in catalysis. Catalysis depends on Lys-161, which acts as the Lowers pKa of active site Tyr. Beta-L-rhamnose is bound at residue Thr-189. Residue Ile-190 coordinates NADP(+). Residue Asn-195 coordinates beta-L-rhamnose.

The protein belongs to the short-chain dehydrogenases/reductases (SDR) family.

The catalysed reaction is L-rhamnofuranose + NAD(+) = L-rhamnono-1,4-lactone + NADH + H(+). It carries out the reaction L-rhamnofuranose + NADP(+) = L-rhamnono-1,4-lactone + NADPH + H(+). The protein operates within carbohydrate degradation; L-rhamnose degradation. Functionally, NAD(P)-dependent dehydrogenase that catalyzes the oxidation of L-rhamnose to L-rhamnono-1,4-lactone. Also shows high activity with L-lyxose and low activity with L-mannose. Can utilize either NAD(+) or NADP(+), with a slight preference for NADP(+). Catalyzes the first step in an alternative pathway for rhamnose utilization that does not involve phosphorylated intermediates. The polypeptide is L-rhamnose 1-dehydrogenase (NAD(P)(+)) (Sphingomonas sp. (strain SKA58)).